Consider the following 105-residue polypeptide: Met repressor (105 aa).

This sequence belongs to the MetJ family. In terms of assembly, homodimer.

It localises to the cytoplasm. Its function is as follows. This regulatory protein, when combined with SAM (S-adenosylmethionine) represses the expression of the methionine regulon and of enzymes involved in SAM synthesis. The chain is Met repressor from Shigella boydii serotype 18 (strain CDC 3083-94 / BS512).